We begin with the raw amino-acid sequence, 414 residues long: Secernin-1 (414 aa).

Ala2 bears the N-acetylalanine mark. Cys9 is a catalytic residue.

This sequence belongs to the peptidase C69 family. Secernin subfamily.

The protein resides in the cytoplasm. Regulates exocytosis in mast cells. Increases both the extent of secretion and the sensitivity of mast cells to stimulation with calcium. This is Secernin-1 (SCRN1) from Bos taurus (Bovine).